Consider the following 485-residue polypeptide: UDP-N-acetylmuramate--L-alanine ligase (485 aa).

An ATP-binding site is contributed by 112-118 (GTHGKTT).

It belongs to the MurCDEF family.

Its subcellular location is the cytoplasm. The catalysed reaction is UDP-N-acetyl-alpha-D-muramate + L-alanine + ATP = UDP-N-acetyl-alpha-D-muramoyl-L-alanine + ADP + phosphate + H(+). Its pathway is cell wall biogenesis; peptidoglycan biosynthesis. Functionally, cell wall formation. In Variovorax paradoxus (strain S110), this protein is UDP-N-acetylmuramate--L-alanine ligase.